A 126-amino-acid chain; its full sequence is Histone H2B type F-S (126 aa).

Over residues M1–K12 the composition is skewed to low complexity. Residues M1 to E36 form a disordered region. N-acetylproline is present on P2. ADP-ribosyl glutamic acid is present on E3. K6 carries the post-translational modification N6-(2-hydroxyisobutyryl)lysine; alternate. N6-(beta-hydroxybutyryl)lysine; alternate is present on K6. N6-acetyllysine; alternate is present on K6. Residue K6 is modified to N6-butyryllysine; alternate. The residue at position 6 (K6) is an N6-crotonyllysine; alternate. N6-lactoyllysine; alternate is present on K6. K6 is covalently cross-linked (Glycyl lysine isopeptide (Lys-Gly) (interchain with G-Cter in SUMO2); alternate). Position 7 is an ADP-ribosylserine (S7). At K12 the chain carries N6-(beta-hydroxybutyryl)lysine; alternate. K12 and K13 each carry N6-acetyllysine; alternate. An N6-crotonyllysine; alternate mark is found at K12 and K13. At K12 the chain carries N6-lactoyllysine; alternate. The residue at position 13 (K13) is an N6-(2-hydroxyisobutyryl)lysine; alternate. Phosphoserine; by STK4/MST1 is present on S15. An N6-acetyllysine; alternate mark is found at K16, K17, K21, and K24. Residues K16, K17, K21, and K24 each carry the N6-crotonyllysine; alternate modification. N6-lactoyllysine; alternate occurs at positions 16, 17, 21, and 24. N6-(beta-hydroxybutyryl)lysine; alternate occurs at positions 17 and 21. K17 carries the post-translational modification N6-glutaryllysine; alternate. K21 and K24 each carry N6-(2-hydroxyisobutyryl)lysine; alternate. N6-butyryllysine; alternate is present on K21. Residue K21 forms a Glycyl lysine isopeptide (Lys-Gly) (interchain with G-Cter in SUMO2); alternate linkage. Position 25 is an N6-(2-hydroxyisobutyryl)lysine (K25). K35 is modified (N6-(2-hydroxyisobutyryl)lysine; alternate). The residue at position 35 (K35) is an N6-(beta-hydroxybutyryl)lysine; alternate. An N6-crotonyllysine; alternate modification is found at K35. K35 bears the N6-glutaryllysine; alternate mark. Position 35 is an N6-succinyllysine; alternate (K35). K35 participates in a covalent cross-link: Glycyl lysine isopeptide (Lys-Gly) (interchain with G-Cter in ubiquitin); alternate. PolyADP-ribosyl glutamic acid is present on E36. The residue at position 37 (S37) is a Phosphoserine; by AMPK. K44, K47, and K58 each carry N6-(2-hydroxyisobutyryl)lysine; alternate. K44 is subject to N6-lactoyllysine; alternate. K44 and K47 each carry N6-glutaryllysine; alternate. K47 carries the N6-methyllysine; alternate modification. N6,N6-dimethyllysine; alternate is present on K58. At R80 the chain carries Dimethylated arginine. The residue at position 86 (K86) is an N6-(2-hydroxyisobutyryl)lysine; alternate. At K86 the chain carries N6-(beta-hydroxybutyryl)lysine; alternate. K86 is subject to N6-acetyllysine; alternate. N6-lactoyllysine; alternate is present on K86. At K86 the chain carries N6,N6,N6-trimethyllysine; alternate. An omega-N-methylarginine mark is found at R87 and R93. K109 carries the N6-(2-hydroxyisobutyryl)lysine; alternate modification. K109 is modified (N6-lactoyllysine; alternate). N6-glutaryllysine; alternate is present on K109. N6-methyllysine; alternate is present on K109. O-linked (GlcNAc) serine glycosylation is present at S113. T116 carries the post-translational modification Phosphothreonine. Residues K117 and K121 each carry the N6-(2-hydroxyisobutyryl)lysine; alternate modification. An N6-(beta-hydroxybutyryl)lysine; alternate mark is found at K117 and K121. K117 and K121 each carry N6-lactoyllysine; alternate. K117 and K121 each carry N6-glutaryllysine; alternate. An N6-succinyllysine; alternate mark is found at K117 and K121. K117 carries the post-translational modification N6-malonyllysine; alternate. K117 is subject to N6-methylated lysine; alternate. K121 participates in a covalent cross-link: Glycyl lysine isopeptide (Lys-Gly) (interchain with G-Cter in ubiquitin); alternate.

Belongs to the histone H2B family. The nucleosome is a histone octamer containing two molecules each of H2A, H2B, H3 and H4 assembled in one H3-H4 heterotetramer and two H2A-H2B heterodimers. The octamer wraps approximately 147 bp of DNA. Monoubiquitination at Lys-35 (H2BK34Ub) by the MSL1/MSL2 dimer is required for histone H3 'Lys-4' (H3K4me) and 'Lys-79' (H3K79me) methylation and transcription activation at specific gene loci, such as HOXA9 and MEIS1 loci. Similarly, monoubiquitination at Lys-121 (H2BK120Ub) by the RNF20/40 complex gives a specific tag for epigenetic transcriptional activation and is also prerequisite for histone H3 'Lys-4' and 'Lys-79' methylation. It also functions cooperatively with the FACT dimer to stimulate elongation by RNA polymerase II. H2BK120Ub also acts as a regulator of mRNA splicing: deubiquitination by USP49 is required for efficient cotranscriptional splicing of a large set of exons. In terms of processing, phosphorylation at Ser-37 (H2BS36ph) by AMPK in response to stress promotes transcription. Phosphorylated on Ser-15 (H2BS14ph) by STK4/MST1 during apoptosis; which facilitates apoptotic chromatin condensation. Also phosphorylated on Ser-15 in response to DNA double strand breaks (DSBs), and in correlation with somatic hypermutation and immunoglobulin class-switch recombination. Post-translationally, glcNAcylation at Ser-113 promotes monoubiquitination of Lys-121. It fluctuates in response to extracellular glucose, and associates with transcribed genes. ADP-ribosylated by PARP1 or PARP2 on Ser-7 (H2BS6ADPr) in response to DNA damage. H2BS6ADPr promotes recruitment of CHD1L. Mono-ADP-ribosylated on Glu-3 (H2BE2ADPr) by PARP3 in response to single-strand breaks. Poly ADP-ribosylation on Glu-36 (H2BE35ADPr) by PARP1 regulates adipogenesis: it inhibits phosphorylation at Ser-37 (H2BS36ph), thereby blocking expression of pro-adipogenetic genes. In terms of processing, crotonylation (Kcr) is specifically present in male germ cells and marks testis-specific genes in post-meiotic cells, including X-linked genes that escape sex chromosome inactivation in haploid cells. Crotonylation marks active promoters and enhancers and confers resistance to transcriptional repressors. It is also associated with post-meiotically activated genes on autosomes. Post-translationally, lactylated in macrophages by EP300/P300 by using lactoyl-CoA directly derived from endogenous or exogenous lactate, leading to stimulates gene transcription.

The protein resides in the nucleus. It localises to the chromosome. Core component of nucleosome. Nucleosomes wrap and compact DNA into chromatin, limiting DNA accessibility to the cellular machineries which require DNA as a template. Histones thereby play a central role in transcription regulation, DNA repair, DNA replication and chromosomal stability. DNA accessibility is regulated via a complex set of post-translational modifications of histones, also called histone code, and nucleosome remodeling. Its function is as follows. Has broad antibacterial activity. May contribute to the formation of the functional antimicrobial barrier of the colonic epithelium, and to the bactericidal activity of amniotic fluid. In Homo sapiens (Human), this protein is Histone H2B type F-S.